The sequence spans 245 residues: DNA repair protein RecO (245 aa).

It belongs to the RecO family.

Involved in DNA repair and RecF pathway recombination. This Porphyromonas gingivalis (strain ATCC 33277 / DSM 20709 / CIP 103683 / JCM 12257 / NCTC 11834 / 2561) protein is DNA repair protein RecO.